A 510-amino-acid chain; its full sequence is NAD(P)H-quinone oxidoreductase subunit 2 A, chloroplastic (510 aa).

13 helical membrane-spanning segments follow: residues 24-44, 57-77, 99-119, 124-144, 149-169, 183-203, 227-247, 295-315, 323-343, 354-374, 395-415, 418-438, and 484-504; these read LLLFDGSFIFPECILIFGLIL, IPWLYFISSTSLVMSITALLF, IFQFLILLCSTLCIPLSVEYI, MAITEFLLFVLTATLGGMFLC, LITIFVAPECFSLCSYLLSGY, YLLMGGASSSILVHGFSWLYG, PGISIALIFITVGIGFKLSPA, WHLLLEILAILSMILGNLIAI, MLAYSSIGQIGYVIIGIIVGD, YMLFYISMNLGTFACIVSFGL, ALSLALCLLSLGGLPPLAGFF, LHLFWCGWQAGLYFLVSIGLL, and MIVCVIASTIPGISMNPIIAI.

It belongs to the complex I subunit 2 family. In terms of assembly, NDH is composed of at least 16 different subunits, 5 of which are encoded in the nucleus.

Its subcellular location is the plastid. The protein localises to the chloroplast thylakoid membrane. It catalyses the reaction a plastoquinone + NADH + (n+1) H(+)(in) = a plastoquinol + NAD(+) + n H(+)(out). The catalysed reaction is a plastoquinone + NADPH + (n+1) H(+)(in) = a plastoquinol + NADP(+) + n H(+)(out). Functionally, NDH shuttles electrons from NAD(P)H:plastoquinone, via FMN and iron-sulfur (Fe-S) centers, to quinones in the photosynthetic chain and possibly in a chloroplast respiratory chain. The immediate electron acceptor for the enzyme in this species is believed to be plastoquinone. Couples the redox reaction to proton translocation, and thus conserves the redox energy in a proton gradient. This Vitis vinifera (Grape) protein is NAD(P)H-quinone oxidoreductase subunit 2 A, chloroplastic.